The chain runs to 258 residues: Type III pantothenate kinase (258 aa).

6–13 (DVGNTNIV) contributes to the ATP binding site. Substrate-binding positions include Tyr-100 and 107 to 110 (GADR). The active-site Proton acceptor is the Asp-109. Asp-129 is a K(+) binding site. Thr-132 lines the ATP pocket. Thr-184 serves as a coordination point for substrate.

Belongs to the type III pantothenate kinase family. Homodimer. NH4(+) is required as a cofactor. The cofactor is K(+).

The protein localises to the cytoplasm. It catalyses the reaction (R)-pantothenate + ATP = (R)-4'-phosphopantothenate + ADP + H(+). It functions in the pathway cofactor biosynthesis; coenzyme A biosynthesis; CoA from (R)-pantothenate: step 1/5. Its function is as follows. Catalyzes the phosphorylation of pantothenate (Pan), the first step in CoA biosynthesis. This is Type III pantothenate kinase from Desulfitobacterium hafniense (strain DSM 10664 / DCB-2).